Here is a 73-residue protein sequence, read N- to C-terminus: Conotoxin Gla(3)-TxVI (73 aa).

Residues 1–19 form the signal peptide; sequence MQKLIILLLVAAVLMSAQA. Positions 20–44 are excised as a propeptide; the sequence is VLQEKRPKEKIKFLSKRKTDAEKQQ. 3 disulfide bridges follow: Cys48–Cys62, Cys55–Cys66, and Cys61–Cys71. Pro49 is subject to 4-hydroxyproline. 4-carboxyglutamate; partial is present on Glu53. Pro54 is modified (4-hydroxyproline). Glu60 bears the 4-carboxyglutamate mark. Trp64 carries the post-translational modification 6'-bromotryptophan.

The protein belongs to the conotoxin O2 superfamily. Expressed by the venom duct.

The protein resides in the secreted. The polypeptide is Conotoxin Gla(3)-TxVI (Conus textile (Cloth-of-gold cone)).